We begin with the raw amino-acid sequence, 219 residues long: GTP-binding nuclear protein GSP1/CNR1 (219 aa).

Serine 2 carries the N-acetylserine modification. The residue at position 2 (serine 2) is a Phosphoserine. Residues 9–173 (EVPTFKLVLV…LWLARKLAGN (165 aa)) form the Small GTPase Ran-type domain. 20–27 (DGGTGKTT) is a GTP binding site. The segment at 39–47 (KKYIATIGV) is switch-I. GTP contacts are provided by residues glycine 70, 124-127 (NKVD), and 152-154 (SAK). A switch-II region spans residues 70–86 (GQEKFGGLRDGYYINAQ).

Belongs to the small GTPase superfamily. Ran family. Found in a nuclear export complex with RanGTP, exportin and pre-miRNA. Forms a complex with YRB1. Interacts with BUD5, CEX1, RRP12, SRM1, and DIS3/RRP44.

It localises to the nucleus. In terms of biological role, GTP-binding protein involved in nucleocytoplasmic transport. Required for the import of protein into the nucleus and also for RNA export. Essential for cell viability. By analogy with Ras, Ran may be activated when GTP is exchanged for bound GDP by RCC1 and inactivated when GTP is hydrolyzed by Ran upon activation by RanGAP1. In Saccharomyces cerevisiae (strain ATCC 204508 / S288c) (Baker's yeast), this protein is GTP-binding nuclear protein GSP1/CNR1 (GSP1).